Consider the following 324-residue polypeptide: tRNA dimethylallyltransferase (324 aa).

Residue 17–24 participates in ATP binding; sequence GPTASGKT. 19–24 is a binding site for substrate; that stretch reads TASGKT. Interaction with substrate tRNA regions lie at residues 42 to 45, 166 to 170, 251 to 256, and 284 to 291; these read DSAL, QRIQR, RCVGYR, and KRQITWLR.

It belongs to the IPP transferase family. In terms of assembly, monomer. Mg(2+) is required as a cofactor.

The enzyme catalyses adenosine(37) in tRNA + dimethylallyl diphosphate = N(6)-dimethylallyladenosine(37) in tRNA + diphosphate. In terms of biological role, catalyzes the transfer of a dimethylallyl group onto the adenine at position 37 in tRNAs that read codons beginning with uridine, leading to the formation of N6-(dimethylallyl)adenosine (i(6)A). The sequence is that of tRNA dimethylallyltransferase from Burkholderia vietnamiensis (strain G4 / LMG 22486) (Burkholderia cepacia (strain R1808)).